Here is a 613-residue protein sequence, read N- to C-terminus: Dihydroxy-acid dehydratase (613 aa).

Residue Asp-81 coordinates Mg(2+). Cys-122 is a binding site for [2Fe-2S] cluster. Mg(2+)-binding residues include Asp-123 and Lys-124. Lys-124 is subject to N6-carboxylysine. Cys-193 lines the [2Fe-2S] cluster pocket. Glu-489 contacts Mg(2+). Ser-515 serves as the catalytic Proton acceptor.

This sequence belongs to the IlvD/Edd family. In terms of assembly, homodimer. The cofactor is [2Fe-2S] cluster. Requires Mg(2+) as cofactor.

It catalyses the reaction (2R)-2,3-dihydroxy-3-methylbutanoate = 3-methyl-2-oxobutanoate + H2O. The catalysed reaction is (2R,3R)-2,3-dihydroxy-3-methylpentanoate = (S)-3-methyl-2-oxopentanoate + H2O. It functions in the pathway amino-acid biosynthesis; L-isoleucine biosynthesis; L-isoleucine from 2-oxobutanoate: step 3/4. It participates in amino-acid biosynthesis; L-valine biosynthesis; L-valine from pyruvate: step 3/4. Functions in the biosynthesis of branched-chain amino acids. Catalyzes the dehydration of (2R,3R)-2,3-dihydroxy-3-methylpentanoate (2,3-dihydroxy-3-methylvalerate) into 2-oxo-3-methylpentanoate (2-oxo-3-methylvalerate) and of (2R)-2,3-dihydroxy-3-methylbutanoate (2,3-dihydroxyisovalerate) into 2-oxo-3-methylbutanoate (2-oxoisovalerate), the penultimate precursor to L-isoleucine and L-valine, respectively. The polypeptide is Dihydroxy-acid dehydratase (Pseudomonas fluorescens (strain Pf0-1)).